The primary structure comprises 211 residues: NADH-quinone oxidoreductase subunit I (211 aa).

The tract at residues 1-27 is disordered; that stretch reads MANTDRPALPHKRAVPPSRADSGPRRR. 4Fe-4S ferredoxin-type domains lie at 71-101 and 117-146; these read LNRY…VEGA and RVYQ…MTYD. Residues Cys-81, Cys-84, Cys-87, Cys-91, Cys-126, Cys-129, Cys-132, and Cys-136 each coordinate [4Fe-4S] cluster.

Belongs to the complex I 23 kDa subunit family. As to quaternary structure, NDH-1 is composed of 14 different subunits. Subunits NuoA, H, J, K, L, M, N constitute the membrane sector of the complex. The cofactor is [4Fe-4S] cluster.

Its subcellular location is the cell membrane. It catalyses the reaction a quinone + NADH + 5 H(+)(in) = a quinol + NAD(+) + 4 H(+)(out). Functionally, NDH-1 shuttles electrons from NADH, via FMN and iron-sulfur (Fe-S) centers, to quinones in the respiratory chain. The immediate electron acceptor for the enzyme in this species is believed to be menaquinone. Couples the redox reaction to proton translocation (for every two electrons transferred, four hydrogen ions are translocated across the cytoplasmic membrane), and thus conserves the redox energy in a proton gradient. The polypeptide is NADH-quinone oxidoreductase subunit I (Mycobacterium bovis (strain ATCC BAA-935 / AF2122/97)).